A 620-amino-acid polypeptide reads, in one-letter code: Probably inactive leucine-rich repeat receptor-like protein kinase At5g48380 (620 aa).

A signal peptide spans 1 to 27 (MMMGRLVFVIWLYNCLCLLLLSSLVDA). Residues 28 to 228 (DQANIDCLRT…SASSSRGKVV (201 aa)) lie on the Extracellular side of the membrane. 4 N-linked (GlcNAc...) asparagine glycosylation sites follow: Asn56, Asn111, Asn119, and Asn147. 4 LRR repeats span residues 101-124 (DLTG…STLI), 126-148 (LVTI…ISNI), 150-172 (FLNT…LAQL), and 174-196 (RLKT…NQTL). Asn193 is a glycosylation site (N-linked (GlcNAc...) asparagine). A helical membrane pass occupies residues 229–249 (IIAAVGGLTAAALVVGVVLFF). The Cytoplasmic portion of the chain corresponds to 250–620 (YFRKLGAVRK…DFIEELIVAR (371 aa)). Thr300 carries the phosphothreonine modification. A Protein kinase domain is found at 303-596 (FKKDNIIATG…RAIGESYNFT (294 aa)). Residues 309-317 (IATGRTGTM) and Lys331 each bind ATP. Thr463 is subject to Phosphothreonine. The residue at position 479 (Tyr479) is a Phosphotyrosine. The residue at position 482 (Thr482) is a Phosphothreonine.

This sequence belongs to the protein kinase superfamily. Ser/Thr protein kinase family.

It localises to the cell membrane. The polypeptide is Probably inactive leucine-rich repeat receptor-like protein kinase At5g48380 (Arabidopsis thaliana (Mouse-ear cress)).